A 108-amino-acid polypeptide reads, in one-letter code: ATP synthase epsilon chain (108 aa).

The protein belongs to the ATPase epsilon chain family. F-type ATPases have 2 components, CF(1) - the catalytic core - and CF(0) - the membrane proton channel. CF(1) has five subunits: alpha(3), beta(3), gamma(1), delta(1), epsilon(1). CF(0) has three main subunits: a, b and c.

It localises to the cell inner membrane. Functionally, produces ATP from ADP in the presence of a proton gradient across the membrane. The polypeptide is ATP synthase epsilon chain (Thermotoga maritima (strain ATCC 43589 / DSM 3109 / JCM 10099 / NBRC 100826 / MSB8)).